The primary structure comprises 248 residues: MVKLAFGSLGDSFSATSVKAYVAEFIATLLFVFAGVGSAIAYGQLTNGGALDPAGLVAIAIAHALALFVGVSVAANISGGHLNPAVTFGLAVGGHITILTGLFYWIAQLLGASIACLLLKFVTHGKAIPTHGVAGISELEGVVMEIVITFALVYTVYATAADPKKGSLGTIAPIAIGFIVGANILAAGPFSGGSMNPARSFGPAVAAGNFAGNWVYWVGPLIGGGLAGLVYGDVFIGSYQPVADQDYA.

The next 2 helical transmembrane spans lie at 20 to 40 (AYVAEFIATLLFVFAGVGSAI) and 54 to 74 (AGLVAIAIAHALALFVGVSVA). The NPA 1 signature appears at 83-85 (NPA). 3 consecutive transmembrane segments (helical) span residues 97–119 (TILTGLFYWIAQLLGASIACLLL), 141–161 (GVVMEIVITFALVYTVYATAA), and 168–188 (LGTIAPIAIGFIVGANILAAG). Positions 196 to 198 (NPA) match the NPA 2 motif. The chain crosses the membrane as a helical span at residues 217 to 237 (WVGPLIGGGLAGLVYGDVFIG).

The protein belongs to the MIP/aquaporin (TC 1.A.8) family. TIP (TC 1.A.8.10) subfamily. Expressed in roots and anthers.

It is found in the vacuole membrane. In terms of biological role, aquaporins facilitate the transport of water and small neutral solutes across cell membranes. May be involved in transport from the vacuolar compartment to the cytoplasm. The chain is Probable aquaporin TIP2-1 (TIP2-1) from Oryza sativa subsp. japonica (Rice).